A 336-amino-acid chain; its full sequence is Large ribosomal subunit protein uL1m (336 aa).

The transit peptide at 1-50 (MAAAVRCLRRVLIHHQRHCLCKMASQASLYPCSVNSLLHNRHFAAAAAAA) directs the protein to the mitochondrion. Ser-85 carries the phosphoserine modification.

Belongs to the universal ribosomal protein uL1 family.

It is found in the mitochondrion. The polypeptide is Large ribosomal subunit protein uL1m (Mrpl1) (Mus musculus (Mouse)).